The chain runs to 542 residues: Chaperonin GroEL 2 (542 aa).

Residues 30–33 (TLGP), K51, 87–91 (DGTTT), G415, and D496 contribute to the ATP site.

It belongs to the chaperonin (HSP60) family. In terms of assembly, forms a cylinder of 14 subunits composed of two heptameric rings stacked back-to-back. Interacts with the co-chaperonin GroES.

Its subcellular location is the cytoplasm. The catalysed reaction is ATP + H2O + a folded polypeptide = ADP + phosphate + an unfolded polypeptide.. Functionally, together with its co-chaperonin GroES, plays an essential role in assisting protein folding. The GroEL-GroES system forms a nano-cage that allows encapsulation of the non-native substrate proteins and provides a physical environment optimized to promote and accelerate protein folding. This Rhizobium meliloti (strain 1021) (Ensifer meliloti) protein is Chaperonin GroEL 2.